Here is a 422-residue protein sequence, read N- to C-terminus: Cytokine receptor-like factor 1 (422 aa).

The N-terminal stretch at 1-37 is a signal peptide; the sequence is MPAGRRGPAAQSARRPPPLLPLLLLLCVLGAPRAGSG. Positions 38 to 131 constitute an Ig-like C2-type domain; sequence AHTAVISPQD…SILAGSCLYV (94 aa). N-linked (GlcNAc...) asparagine glycosylation is found at Asn92, Asn104, and Asn140. 2 Fibronectin type-III domains span residues 137–232 and 237–341; these read KPVN…ILDV and PPPD…TPRS. Cys143 and Cys153 form a disulfide bridge. Asn168 is a glycosylation site (N-linked (GlcNAc...) asparagine). Cys184 and Cys195 are disulfide-bonded. Ser219 carries the phosphoserine modification. The N-linked (GlcNAc...) asparagine glycan is linked to Asn292. The short motif at 327 to 331 is the WSXWS motif element; sequence WSEWS. The tract at residues 332–363 is disordered; sequence HPTAASTPRSERPGPGGGACEPRGGEPSSGPV. A glycan (N-linked (GlcNAc...) asparagine) is linked at Asn382. The segment at 399–422 is disordered; it reads HKTRNQDEGILPSGRRGTARGPAR.

Belongs to the type I cytokine receptor family. Type 3 subfamily. In terms of assembly, forms covalent di- and tetramers. Forms a heteromeric complex with cardiotrophin-like cytokine CLCF1/CLC; the CRLF1-CLCF1 complex is a ligand for the ciliary neurotrophic factor receptor/CNTFR. The CRLF1-CLCF1 heterodimer binds SORL1 (via N-terminal ectodomain); within this complex, the interaction is mediated predominantly by the CRLF1 moiety. The tripartite signaling complex formed by CRLF1, CLCF1 and CNTFR also binds SORL1. In terms of tissue distribution, highest levels of expression observed in spleen, thymus, lymph node, appendix, bone marrow, stomach, placenta, heart, thyroid and ovary. Strongly expressed also in fetal lung.

It is found in the secreted. Functionally, in complex with CLCF1, forms a heterodimeric neurotropic cytokine that plays a crucial role during neuronal development. May also play a regulatory role in the immune system. The sequence is that of Cytokine receptor-like factor 1 (CRLF1) from Homo sapiens (Human).